Consider the following 327-residue polypeptide: Ribose-phosphate pyrophosphokinase (327 aa).

Residues 40–42 and 99–100 each bind ATP; these read DGE and RQ. Residues His134 and Asp173 each contribute to the Mg(2+) site. Lys196 is a catalytic residue. D-ribose 5-phosphate is bound by residues Arg198, Asp222, and 226–230; that span reads DTANT.

It belongs to the ribose-phosphate pyrophosphokinase family. Class I subfamily. In terms of assembly, homohexamer. Mg(2+) is required as a cofactor.

The protein resides in the cytoplasm. The enzyme catalyses D-ribose 5-phosphate + ATP = 5-phospho-alpha-D-ribose 1-diphosphate + AMP + H(+). Its pathway is metabolic intermediate biosynthesis; 5-phospho-alpha-D-ribose 1-diphosphate biosynthesis; 5-phospho-alpha-D-ribose 1-diphosphate from D-ribose 5-phosphate (route I): step 1/1. Involved in the biosynthesis of the central metabolite phospho-alpha-D-ribosyl-1-pyrophosphate (PRPP) via the transfer of pyrophosphoryl group from ATP to 1-hydroxyl of ribose-5-phosphate (Rib-5-P). In Neisseria meningitidis serogroup A / serotype 4A (strain DSM 15465 / Z2491), this protein is Ribose-phosphate pyrophosphokinase.